Here is a 479-residue protein sequence, read N- to C-terminus: Poly(A) polymerase catalytic subunit (479 aa).

Active-site residues include Asp-202 and Asp-204. Ca(2+) is bound by residues Asp-202, Asp-204, and Asp-253.

This sequence belongs to the poxviridae poly(A) polymerase catalytic subunit family. As to quaternary structure, heterodimer of a large (catalytic) subunit and a small (regulatory) subunit.

The enzyme catalyses RNA(n) + ATP = RNA(n)-3'-adenine ribonucleotide + diphosphate. Its function is as follows. Polymerase that creates the 3'-poly(A) tail of mRNA's. The chain is Poly(A) polymerase catalytic subunit (OPG063) from Cynomys gunnisoni (Gunnison's prairie dog).